The chain runs to 659 residues: MAQAHKESVLAAACVRTPVNPYTKAPLALYERELGERQQQRTASVSPQRLPRTSMGTPAAPAAALDWEEARCCKSRRCQDWVFDISKVHHPDKDYYVQVEKLKKAHLQNMEQLEKMYDKKLHLSGVHNPENEQGVVREVYRSAWEPKSVLPAEYDDKYLKHSLSGSVSPSLSESSHESTNGDSSDSEHSVSARNKILDMWNEFTVEDYIRNSEYFSKEIAKNKTSKKSKEWSHKITIPEPFQMTIRESKKKEMNIKSKSEIELENNLLKKKLEEEAECQKKFRANPVPSSVYLPLYQEIVERNEERRSFVKEKSKDILLATQKPFQFIEREERKKTLRLDFMNLSTSVPSANHFKAKPVPKSIYGTSTAERLKEEELYRGIRIHMRAQELLQNSSYPTITLAPGAHSGTKKGKCYKPKEKQKHKPKISATIPHSQTMHENQQKRLPESTSTKHVTVCEPFQLRTSNIPSHKEKIIMDIQADEENLKETRWPYKSPRAQARIHSSAGTLNPQGEALCNIPRSTELSKRREHAIRKREKQRTKDYMKELEAMEQRVLNKPLLIERVAQRNALMSAEKQYLNVLRDLGLSEEFVSKNGQSASVDEHVSVREENNPRAESTEGTLVLEDLLDDAEKYQTDPESEEAQEEDAYSTDEDHSMEEI.

The segment at 34–59 (LGERQQQRTASVSPQRLPRTSMGTPA) is disordered. Positions 96 to 120 (YVQVEKLKKAHLQNMEQLEKMYDKK) form a coiled coil. Disordered regions lie at residues 165-190 (GSVS…EHSV) and 401-428 (LAPG…PKIS). Residues 408–426 (GTKKGKCYKPKEKQKHKPK) are compositionally biased toward basic residues. Residues 531–557 (AIRKREKQRTKDYMKELEAMEQRVLNK) are a coiled coil. The disordered stretch occupies residues 594–659 (NGQSASVDEH…TDEDHSMEEI (66 aa)). Basic and acidic residues predominate over residues 600-616 (VDEHVSVREENNPRAES). Residues 637 to 650 (PESEEAQEEDAYST) show a composition bias toward acidic residues.

Belongs to the FAM161 family.

It is found in the cytoplasm. Its subcellular location is the cytoskeleton. The protein localises to the cilium basal body. It localises to the cell projection. The protein resides in the cilium. It is found in the microtubule organizing center. Its subcellular location is the centrosome. The protein localises to the centriole. Involved in ciliogenesis. The sequence is that of Protein FAM161A (fam161a) from Xenopus tropicalis (Western clawed frog).